We begin with the raw amino-acid sequence, 206 residues long: dITP/XTP pyrophosphatase (206 aa).

Residue 7–12 coordinates substrate; sequence SSHGYK. The Proton acceptor role is filled by aspartate 70. Aspartate 70 is a Mg(2+) binding site. Residues threonine 71, 154–157, lysine 177, and 182–183 contribute to the substrate site; these read FGYD and HR.

It belongs to the HAM1 NTPase family. In terms of assembly, homodimer. Requires Mg(2+) as cofactor.

The catalysed reaction is XTP + H2O = XMP + diphosphate + H(+). The enzyme catalyses dITP + H2O = dIMP + diphosphate + H(+). It catalyses the reaction ITP + H2O = IMP + diphosphate + H(+). In terms of biological role, pyrophosphatase that catalyzes the hydrolysis of nucleoside triphosphates to their monophosphate derivatives, with a high preference for the non-canonical purine nucleotides XTP (xanthosine triphosphate), dITP (deoxyinosine triphosphate) and ITP. Seems to function as a house-cleaning enzyme that removes non-canonical purine nucleotides from the nucleotide pool, thus preventing their incorporation into DNA/RNA and avoiding chromosomal lesions. This Chlamydia abortus (strain DSM 27085 / S26/3) (Chlamydophila abortus) protein is dITP/XTP pyrophosphatase.